A 1248-amino-acid chain; its full sequence is Structural polyprotein (1248 aa).

Positions 1–10 (MEFIPTQTFY) are enriched in polar residues. The interval 1-104 (MEFIPTQTFY…KKKKPGRRER (104 aa)) is disordered. Residues 36-68 (RKAGQLAQLISAVNKLTMRAVPQQKPRKNRKNK) form a host transcription inhibition region. Positions 60-72 (KPRKNRKNKKQKQ) are enriched in basic residues. A Nuclear localization signal motif is present at residues 61–99 (PRKNRKNKKQKQKQQAPRNNMNQKKQPPKKKPAQKKKKP). The span at 73 to 85 (KQQAPRNNMNQKK) shows a compositional bias: low complexity. Residues 84 to 114 (KKQPPKKKPAQKKKKPGRRERMCMKIENDCI) form a binding to the viral RNA region. Positions 86–101 (QPPKKKPAQKKKKPGR) are enriched in basic residues. Residues 99 to 113 (PGRRERMCMKIENDC) form a ribosome-binding region. A disulfide bond links Cys113 and Cys128. Residues 113 to 261 (CIFEVKHEGK…KITPEGAEEW (149 aa)) form the Peptidase S3 domain. The active-site Charge relay system is His139. The short motif at 144–154 (IDNADLAKLAF) is the Nuclear export signal element. The segment at 155-160 (KRSSKY) is interaction with spike glycoprotein E2. The active-site Charge relay system is Asp161. The interval 183 to 193 (PEGYYNWHHGA) is dimerization of the capsid protein. The active-site Charge relay system is the Ser213. Residues 219–223 (DNKGR) are dimerization of the capsid protein. Positions 262-274 (SLAIPVMCLLANT) are functions as an uncleaved signal peptide for the precursor of protein E3/E2. The Extracellular segment spans residues 262 to 692 (SLAIPVMCLL…YYYELYPTMT (431 aa)). 9 disulfides stabilise this stretch: Cys269–Cys278, Cys283–Cys287, Cys286–Cys318, Cys344–Cys450, Cys347–Cys353, Cys416–Cys430, Cys478–Cys591, Cys526–Cys550, and Cys528–Cys545. N-linked (GlcNAc...) asparagine; by host glycosylation occurs at Asn273. Interaction with host Mxra8 receptor regions lie at residues 351 to 354 (HSCH) and 387 to 389 (HDW). Interaction with host Mxra8 receptor regions lie at residues 509–512 (QSGN) and 541–547 (VINNCKV). Residues Asn588 and Asn670 are each glycosylated (N-linked (GlcNAc...) asparagine; by host). Residues 693–713 (VVVVSVASFVLLSMVGVAVGM) traverse the membrane as a helical segment. Topologically, residues 714–748 (CMCARRRCITPYELTPGATVPFLLSLICCIRTAKA) are cytoplasmic. An interaction with the capsid protein region spans residues 716–720 (CARRR). 3 S-palmitoyl cysteine; by host lipidation sites follow: Cys721, Cys741, and Cys742. The segment at 721–741 (CITPYELTPGATVPFLLSLIC) is transient transmembrane before p62-6K protein processing. Cys721 and Cys742 form a disulfide bridge. Residues 749–763 (ATYQEAAVYLWNEQQ) lie on the Extracellular side of the membrane. A helical membrane pass occupies residues 764–784 (PLFWLQAIIPLAALIVLCNCL). Topologically, residues 785-795 (RLLPCCCKTLT) are cytoplasmic. Residues 796-816 (FLAVMSVGAHTVSAYEHVTVI) form a helical membrane-spanning segment. The Extracellular segment spans residues 817–1224 (PNTVGVPYKT…AMSWVQKITG (408 aa)). 3 cysteine pairs are disulfide-bonded: Cys858/Cys923, Cys871/Cys903, and Cys877/Cys887. Residues 893–910 (VYPFMWGGAYCFCDTENT) are E1 fusion peptide loop. Asn950 and Asn1079 each carry an N-linked (GlcNAc...) asparagine; by host glycan. Cystine bridges form between Cys1068–Cys1080, Cys1110–Cys1185, Cys1115–Cys1189, and Cys1137–Cys1179. The helical transmembrane segment at 1225–1245 (GVGLVVAVAALILIVVLCVSF) threads the bilayer. Residue Cys1242 is the site of S-palmitoyl cysteine; by host attachment. Over 1246-1248 (SRH) the chain is Cytoplasmic.

Homodimer. Homomultimer. Interacts with host karyopherin KPNA4; this interaction allows the nuclear import of the viral capsid protein. Interacts with spike glycoprotein E2. Interacts with host IRAK1; the interaction leads to inhibition of IRAK1-dependent signaling. As to quaternary structure, the precursor of protein E3/E2 and E1 form a heterodimer shortly after synthesis. In terms of assembly, interacts with spike glycoprotein E2. The precursor of protein E3/E2 and E1 form a heterodimer shortly after synthesis. Processing of the precursor of protein E3/E2 into E2 and E3 results in a heterodimer of the spike glycoproteins E2 and E1. Spike at virion surface are constituted of three E2-E1 heterodimers. After target cell attachment and endocytosis, E1 change conformation to form homotrimers. Interacts with 6K protein. Interacts with host MXRA8; this interaction mediates virus entry. The interaction involves 2 adjacent E2-E1 heterodimers. Interacts with spike glycoprotein E1. Processing of the precursor of protein E3/E2 into E2 and E3 results in a heterodimer of the spike glycoproteins E2 and E1. Spike at virion surface are constituted of a trimer of E2-E1 heterodimers. Interacts with 6K protein. Interacts with host MXRA8; this interaction mediates virus entry. The interaction involves 2 adjacent E2-E1 heterodimers. As to quaternary structure, oligomer. Interacts with spike glycoprotein E1. Interacts with spike glycoprotein E2. In terms of processing, structural polyprotein: Specific enzymatic cleavages in vivo yield mature proteins. Capsid protein is auto-cleaved during polyprotein translation, unmasking a signal peptide at the N-terminus of the precursor of E3/E2. The remaining polyprotein is then targeted to the host endoplasmic reticulum, where host signal peptidase cleaves it into pE2, 6K and E1 proteins. pE2 is further processed to mature E3 and E2 by host furin in trans-Golgi vesicle. Palmitoylated via thioester bonds. These palmitoylations may induce disruption of the C-terminus transmembrane. This would result in the reorientation of E2 C-terminus from lumenal to cytoplasmic side. Post-translationally, N-glycosylated. In terms of processing, palmitoylated via thioester bonds.

Its subcellular location is the virion. The protein resides in the host cytoplasm. It is found in the host cell membrane. The protein localises to the host nucleus. It localises to the virion membrane. Its subcellular location is the host Golgi apparatus. The protein resides in the host trans-Golgi network. It is found in the host endoplasmic reticulum. It carries out the reaction Autocatalytic release of the core protein from the N-terminus of the togavirus structural polyprotein by hydrolysis of a -Trp-|-Ser- bond.. Its function is as follows. Forms an icosahedral capsid with a T=4 symmetry composed of 240 copies of the capsid protein surrounded by a lipid membrane through which penetrate 80 spikes composed of trimers of E1-E2 heterodimers. The capsid protein binds to the viral RNA genome at a site adjacent to a ribosome binding site for viral genome translation following genome release. Possesses a protease activity that results in its autocatalytic cleavage from the nascent structural protein. Following its self-cleavage, the capsid protein transiently associates with ribosomes, and within several minutes the protein binds to viral RNA and rapidly assembles into icosahedric core particles. The resulting nucleocapsid eventually associates with the cytoplasmic domain of the spike glycoprotein E2 at the cell membrane, leading to budding and formation of mature virions. In case of infection, new virions attach to target cells and after clathrin-mediated endocytosis their membrane fuses with the host endosomal membrane. This leads to the release of the nucleocapsid into the cytoplasm, followed by an uncoating event necessary for the genomic RNA to become accessible. The uncoating might be triggered by the interaction of capsid proteins with ribosomes. Binding of ribosomes would release the genomic RNA since the same region is genomic RNA-binding and ribosome-binding. Specifically inhibits interleukin-1 receptor-associated kinase 1/IRAK1-dependent signaling during viral entry, representing a means by which the alphaviruses may evade innate immune detection and activation prior to viral gene expression. Degrades host cyclic GMP-AMP synthase (CGAS) thereby inhibiting the cGAS-STING pathway. Provides the signal sequence for the translocation of the precursor of protein E3/E2 to the host endoplasmic reticulum. Furin-cleaved E3 remains associated with spike glycoprotein E1 and mediates pH protection of the latter during the transport via the secretory pathway. After virion release from the host cell, the assembly protein E3 is gradually released in the extracellular space. In terms of biological role, plays a role in viral attachment to target host cell, by binding to the cell receptor MXRA8. Synthesized as a p62 precursor which is processed by furin at the cell membrane just before virion budding, giving rise to E2-E1 heterodimer. The p62-E1 heterodimer is stable, whereas E2-E1 is unstable and dissociate at low pH. p62 is processed at the last step, presumably to avoid E1 fusion activation before its final export to cell surface. E2 C-terminus contains a transitory transmembrane that would be disrupted by palmitoylation, resulting in reorientation of the C-terminal tail from lumenal to cytoplasmic side. This step is critical since E2 C-terminus is involved in budding by interacting with capsid proteins. This release of E2 C-terminus in cytoplasm occurs lately in protein export, and precludes premature assembly of particles at the endoplasmic reticulum membrane. Functionally, acts as a viroporin that participates in virus glycoprotein processing and transport to the plasma membrane, cell permeabilization and budding of viral particles. Disrupts the calcium homeostasis of the cell, probably at the endoplasmic reticulum level. This leads to cytoplasmic calcium elevation. Because of its lipophilic properties, the 6K protein is postulated to influence the selection of lipids that interact with the transmembrane domains of the glycoproteins, which, in turn, affects the deformability of the bilayer required for the extreme curvature that occurs as budding proceeds. Present in low amount in virions, about 3% compared to viral glycoproteins. Its function is as follows. Class II viral fusion protein. Fusion activity is inactive as long as E1 is bound to E2 in mature virion. After virus attachment to target cell via host MXRA8 and endocytosis, acidification of the endosome induce dissociation of E1/E2 heterodimer and concomitant trimerization of the E1 subunits. This E1 trimer is fusion active, and promotes release of viral nucleocapsid in cytoplasm after endosome and viral membrane fusion. Efficient fusion requires the presence of cholesterol and sphingolipid in the target membrane. The protein is Structural polyprotein of Chikungunya virus (strain Nagpur) (CHIKV).